We begin with the raw amino-acid sequence, 207 residues long: Small ribosomal subunit protein uS4 (207 aa).

Positions 31-55 (KCKLDSKPGQHGRTSGARTSDYGTQ) are disordered. The segment covering 42-53 (GRTSGARTSDYG) has biased composition (polar residues). The region spanning 97–160 (SRLDNVVYRM…KKQARIVEAL (64 aa)) is the S4 RNA-binding domain.

Belongs to the universal ribosomal protein uS4 family. As to quaternary structure, part of the 30S ribosomal subunit. Contacts protein S5. The interaction surface between S4 and S5 is involved in control of translational fidelity.

Its function is as follows. One of the primary rRNA binding proteins, it binds directly to 16S rRNA where it nucleates assembly of the body of the 30S subunit. With S5 and S12 plays an important role in translational accuracy. The sequence is that of Small ribosomal subunit protein uS4 from Burkholderia thailandensis (strain ATCC 700388 / DSM 13276 / CCUG 48851 / CIP 106301 / E264).